We begin with the raw amino-acid sequence, 390 residues long: Guanine nucleotide-binding protein alpha-7 subunit (390 aa).

2 stretches are compositionally biased toward low complexity: residues Met-1 to Thr-12 and Ser-22 to Ser-42. The tract at residues Met-1 to Ser-42 is disordered. One can recognise a G-alpha domain in the interval Ser-70–Ile-390. Positions Lys-73–Thr-86 are G1 motif. GTP is bound by residues Gly-78–Ser-85, Leu-213–Ser-219, Asp-238–Gln-242, Asn-307–Asp-310, and Ala-363. Ser-85 is a binding site for Mg(2+). A G2 motif region spans residues Asp-211–Ser-219. Residues Phe-234 to Arg-243 are G3 motif. Residues Ile-303 to Asp-310 form a G4 motif region. A G5 motif region spans residues Thr-361–Thr-366.

It belongs to the G-alpha family. G proteins are composed of 3 units; alpha, beta and gamma. The alpha chain contains the guanine nucleotide binding site.

Its function is as follows. Guanine nucleotide-binding proteins (G proteins) are involved as modulators or transducers in various transmembrane signaling systems. The sequence is that of Guanine nucleotide-binding protein alpha-7 subunit (gpaG) from Dictyostelium discoideum (Social amoeba).